Here is a 387-residue protein sequence, read N- to C-terminus: Chaperone protein DnaJ (387 aa).

In terms of domain architecture, J spans 6–71; that stretch reads DYYEILGVPR…EKRRKYDQFG (66 aa). The CR-type zinc finger occupies 146–228; the sequence is GCEKEIPIYR…CGGTGTVRRQ (83 aa). Zn(2+) contacts are provided by Cys-159, Cys-162, Cys-176, Cys-179, Cys-202, Cys-205, Cys-216, and Cys-219. CXXCXGXG motif repeat units follow at residues 159–166, 176–183, 202–209, and 216–223; these read CSVCGGSG, CQKCGGTG, CDACGGVG, and CRECGGTG.

Belongs to the DnaJ family. Homodimer. The cofactor is Zn(2+).

The protein resides in the cytoplasm. Participates actively in the response to hyperosmotic and heat shock by preventing the aggregation of stress-denatured proteins and by disaggregating proteins, also in an autonomous, DnaK-independent fashion. Unfolded proteins bind initially to DnaJ; upon interaction with the DnaJ-bound protein, DnaK hydrolyzes its bound ATP, resulting in the formation of a stable complex. GrpE releases ADP from DnaK; ATP binding to DnaK triggers the release of the substrate protein, thus completing the reaction cycle. Several rounds of ATP-dependent interactions between DnaJ, DnaK and GrpE are required for fully efficient folding. Also involved, together with DnaK and GrpE, in the DNA replication of plasmids through activation of initiation proteins. The protein is Chaperone protein DnaJ of Caldicellulosiruptor saccharolyticus (strain ATCC 43494 / DSM 8903 / Tp8T 6331).